Reading from the N-terminus, the 438-residue chain is Putative permease HI_0125 (438 aa).

13 helical membrane passes run 21-41 (IIAGLTTFLAMVYSVIVVPNM), 51-71 (SVFIATCLVAGLGSILIGLWA), 73-93 (APMAIGCAISLTAFTAFSLVI), 97-117 (VAIPVALGAVFLMGVVFTLIS), 137-157 (AGIGIGLFLLLIAANGVGLVV), 167-187 (LGDFTSFPVMMSLIGLALIIG), 195-215 (GGILWVIIAITIVGLIFDPNV), 238-258 (FMGALQPAILPVVFALVMTAV), 296-316 (LFSGLFGTAPAAVYIESAAGT), 326-346 (AIVVGVLFLLMLFFQPLAFLV), 347-367 (PGYATAPALMYVGLLMLSNVS), 386-406 (FIVLTANIVTGIMLGFAALVI), and 418-438 (NVGTVIIAIVLVAFYAGGWAI). ATP is bound at residue 315–322 (GTAAGGKT).

Belongs to the nucleobase:cation symporter-2 (NCS2) (TC 2.A.40) family. Azg-like subfamily.

It localises to the cell membrane. In Haemophilus influenzae (strain ATCC 51907 / DSM 11121 / KW20 / Rd), this protein is Putative permease HI_0125.